A 323-amino-acid chain; its full sequence is Methionyl-tRNA formyltransferase (323 aa).

Ser121 to Pro124 is a (6S)-5,6,7,8-tetrahydrofolate binding site.

It belongs to the Fmt family.

It catalyses the reaction L-methionyl-tRNA(fMet) + (6R)-10-formyltetrahydrofolate = N-formyl-L-methionyl-tRNA(fMet) + (6S)-5,6,7,8-tetrahydrofolate + H(+). Attaches a formyl group to the free amino group of methionyl-tRNA(fMet). The formyl group appears to play a dual role in the initiator identity of N-formylmethionyl-tRNA by promoting its recognition by IF2 and preventing the misappropriation of this tRNA by the elongation apparatus. This is Methionyl-tRNA formyltransferase from Desulfotalea psychrophila (strain LSv54 / DSM 12343).